The sequence spans 635 residues: Threonine--tRNA ligase (635 aa).

The TGS domain occupies 1–61 (MINISFPDGS…ENDCKLRILT (61 aa)). The interval 242-533 (DHRKLGKELD…LIEEYAGCFP (292 aa)) is catalytic. Zn(2+) is bound by residues C333, H384, and H510.

It belongs to the class-II aminoacyl-tRNA synthetase family. Homodimer. It depends on Zn(2+) as a cofactor.

It localises to the cytoplasm. It catalyses the reaction tRNA(Thr) + L-threonine + ATP = L-threonyl-tRNA(Thr) + AMP + diphosphate + H(+). Catalyzes the attachment of threonine to tRNA(Thr) in a two-step reaction: L-threonine is first activated by ATP to form Thr-AMP and then transferred to the acceptor end of tRNA(Thr). Also edits incorrectly charged L-seryl-tRNA(Thr). This Rickettsia akari (strain Hartford) protein is Threonine--tRNA ligase.